The primary structure comprises 254 residues: Peptide methionine sulfoxide reductase A5 (254 aa).

Positions 1 to 33 (MAISLKRNRFFIPYTNLVFFFFLCVSLLDKTVS) are cleaved as a signal peptide.

The protein belongs to the MsrA Met sulfoxide reductase family.

The catalysed reaction is L-methionyl-[protein] + [thioredoxin]-disulfide + H2O = L-methionyl-(S)-S-oxide-[protein] + [thioredoxin]-dithiol. It carries out the reaction [thioredoxin]-disulfide + L-methionine + H2O = L-methionine (S)-S-oxide + [thioredoxin]-dithiol. Functionally, catalyzes the reduction of methionine sulfoxide (MetSO) to methionine in proteins. Plays a protective role against oxidative stress by restoring activity to proteins that have been inactivated by methionine oxidation. MSRA family specifically reduces the MetSO S-enantiomer. This Arabidopsis thaliana (Mouse-ear cress) protein is Peptide methionine sulfoxide reductase A5 (MSRA5).